A 639-amino-acid polypeptide reads, in one-letter code: 2-oxoacid:ferredoxin oxidoreductase 1, subunit alpha (639 aa).

The YPITP motif motif lies at 266–270; sequence YPITP. The substrate site is built by T269 and R352.

In terms of assembly, heterodimer composed of an alpha and a beta subunit.

The catalysed reaction is a 2-oxocarboxylate + 2 oxidized [2Fe-2S]-[ferredoxin] + CoA = an acyl-CoA + 2 reduced [2Fe-2S]-[ferredoxin] + CO2 + H(+). Catalyzes the coenzyme A-dependent oxidative decarboxylation of different 2-oxoacids such as pyruvate, 2-oxobutyrate and glyoxylate to form their CoA derivatives. This is 2-oxoacid:ferredoxin oxidoreductase 1, subunit alpha from Aeropyrum pernix (strain ATCC 700893 / DSM 11879 / JCM 9820 / NBRC 100138 / K1).